Consider the following 258-residue polypeptide: Glycerol-3-phosphate acyltransferase (258 aa).

A run of 6 helical transmembrane segments spans residues 11 to 31 (IILA…IIIV), 62 to 82 (LVVA…AILL), 94 to 114 (SYFI…YYKF), 124 to 144 (LGLL…IWFI), 160 to 180 (ALII…YFIW), and 212 to 232 (WASG…ILAW).

This sequence belongs to the PlsY family. In terms of assembly, probably interacts with PlsX.

Its subcellular location is the cell membrane. The catalysed reaction is an acyl phosphate + sn-glycerol 3-phosphate = a 1-acyl-sn-glycero-3-phosphate + phosphate. The protein operates within lipid metabolism; phospholipid metabolism. In terms of biological role, catalyzes the transfer of an acyl group from acyl-phosphate (acyl-PO(4)) to glycerol-3-phosphate (G3P) to form lysophosphatidic acid (LPA). This enzyme utilizes acyl-phosphate as fatty acyl donor, but not acyl-CoA or acyl-ACP. The sequence is that of Glycerol-3-phosphate acyltransferase from Mycoplasma mycoides subsp. mycoides SC (strain CCUG 32753 / NCTC 10114 / PG1).